The sequence spans 797 residues: N-acetylneuraminate (7)9-O-acetyltransferase (797 aa).

The Cytoplasmic segment spans residues 1 to 18 (MAALAYNLGKREINHYFS). The helical transmembrane segment at 19 to 39 (VRSAKVLALVAVLLLAACHLA) threads the bilayer. Residues 40–313 (SRRYRGNDSC…QPRPPLTLIQ (274 aa)) are Lumenal-facing. A glycan (N-linked (GlcNAc...) asparagine) is linked at N46. S94 (acyl-ester intermediate) is an active-site residue. N175 and N187 each carry an N-linked (GlcNAc...) asparagine glycan. Catalysis depends on residues D270 and H273. Residues 314–334 (KLAACFFTLSIIGYFIFYVIH) form a helical membrane-spanning segment. Residues 335–363 (RNAHRKNKPCTDLESGEEKKNIINTPVSS) are Cytoplasmic-facing. The helical transmembrane segment at 364–384 (LEILLQSFCKLGLIMAYFYMC) threads the bilayer. The Lumenal segment spans residues 385 to 395 (DRANLFMKENK). Residues 396-416 (FYTHSSFFIPIIYILVLGVFY) form a helical membrane-spanning segment. Residues 417 to 439 (NENTKETKVLNREQTDEWKGWMQ) are Cytoplasmic-facing. Residues 440–460 (LVILIYHISGASTFLPVYMHI) traverse the membrane as a helical segment. R461 is a topological domain (lumenal). The chain crosses the membrane as a helical span at residues 462–482 (VLVAAYLFQTGYGHFSYFWIK). Topologically, residues 483–486 (GDFG) are cytoplasmic. The chain crosses the membrane as a helical span at residues 487–507 (IHRVCQVLFRLNFLVVVLCIV). Residues 508–513 (MDRPYQ) are Lumenal-facing. A helical membrane pass occupies residues 514–534 (FYYFVPLVTVWFMVIYVTLAL). At 535–546 (WPQITQKKANGN) the chain is on the cytoplasmic side. A helical membrane pass occupies residues 547 to 567 (FFWYLGLLLKLGLLLLCIWFL). The Lumenal segment spans residues 568-599 (AYSQGAFEKIFSLWPLSKCFELEGSVYEWWFR). Residues 600 to 620 (WRLDRYVVFHGVLFAFIYLAL) form a helical membrane-spanning segment. At 621–638 (QRRQILSEGKGEPLFSNK) the chain is on the cytoplasmic side. A helical membrane pass occupies residues 639-659 (ISNFLLFVSVVSFLTYSIWAS). Residues 660–671 (SCKNKAECNELH) are Lumenal-facing. Residues 672–692 (PSVSVVQIVAFILIRNIPGYA) traverse the membrane as a helical segment. Over 693–698 (RSIYSS) the chain is Cytoplasmic. Residues 699 to 719 (FFAWFGKISLELFICQYHIWL) form a helical membrane-spanning segment. Topologically, residues 720–725 (AADTRG) are lumenal. The chain crosses the membrane as a helical span at residues 726-746 (ILVLIPGNPTLNIIVSTFIFV). Topologically, residues 747 to 770 (CVAHEISQITTDLAQVVIPKDNPS) are cytoplasmic. The chain crosses the membrane as a helical span at residues 771–791 (LFRRLACTIAFFGGVLILSSI). At 792-797 (QDKSRL) the chain is on the lumenal side.

The protein belongs to the PC-esterase family. CASD1 subfamily. N-glycosylated. Ubiquitously expressed.

Its subcellular location is the golgi apparatus membrane. It catalyses the reaction CMP-N-acetyl-beta-neuraminate + acetyl-CoA = CMP-N-acetyl-9-O-acetyl-beta-neuraminate + CoA. The enzyme catalyses a ganglioside GD3 (d18:1(4E)) + acetyl-CoA = a ganglioside Ac-O-7-GD3(d18:1(4E)) + CoA. It carries out the reaction CMP-N-acetyl-beta-neuraminate + acetyl-CoA = CMP-N-acetyl-7-O-acetyl-beta-neuraminate + CoA. In terms of biological role, key enzyme in the biosynthesis of O-acetylated (O-Ac) sialoglycans such as gangliosides O-AcGD3 and O-AcGD2, which affect various processes such as cell-cell interactions, host-pathogen recognition. Catalyzes the transfer of an acetyl group from a donor, the acetyl-coenzyme-A molecule (acetyl-CoA), to the C7/8/9 OH-position of a sialic acid residue. The primary site of O-acetyl group transfer on sialic acid seems to depend on cell type and can be C7, from which the O-acetyl group could subsequently migrate to the C8 and then to the C9 position, or at C9 with possibility of migrating to the C8 and then to the C7 position. Together with ST8SIA1 (GD3 synthase) it increases the levels of ganglioside Ac-O-7-GD3. Can transfer the acetyl group from acetyl-CoA to free sialate (N-acetylneuraminate, Neu5Ac) in vitro, but has preferred substrate specificity for CMP-activated sialate (CMP-Neu5Ac), resulting in the formation of 9-O-acetylated CMP-Neu5Ac (CMP-Neu5,9Ac2). CMP-Neu5,9Ac2 may be used by sialyltransferases as a sialate donor for glycoconjugate acceptors such as ganglioside GD3. O-acetylation at position C9 of ganglioside GD3 can counteract the pro-apoptotic effects of the ganglioside GD3 in tumor cells. This is N-acetylneuraminate (7)9-O-acetyltransferase from Mus musculus (Mouse).